A 340-amino-acid polypeptide reads, in one-letter code: Erythroferrone (340 aa).

An N-terminal signal peptide occupies residues 1-24; it reads MASTRRPVGARTLLACASLLAAMG. Disordered stretches follow at residues 30 to 63, 79 to 112, and 141 to 161; these read SAEP…IAHA, SDKG…GPPG, and HCTR…PAAQ. Positions 40–58 are enriched in pro residues; that stretch reads PQPPGAELPAPPANSPPEP. Over residues 84 to 95 the composition is skewed to basic residues; it reads NSKRRSKARRLK. A hydroxyproline mark is found at Pro99, Pro101, Pro102, Pro104, Pro105, and Pro107. The span at 99–112 shows a compositional bias: pro residues; it reads PGPPGPPGPQGPPG. Residues 145–154 show a composition bias toward polar residues; sequence DLTTPASGSP. The region spanning 185 to 340 is the C1q domain; sequence APRVEAAFHC…SHFSAILLGL (156 aa). N-linked (GlcNAc...) asparagine glycans are attached at residues Asn229, Asn281, Asn292, and Asn319.

The protein belongs to the adipolin/erythroferrone family. As to quaternary structure, homodimer; disulfide-linked. Forms trimer, hexamers and higher molecular weight oligomers. May form heteromeric complexes with C1QTNF2 and C1QTNF12 and, to a lesser extent, with C1QTNF5 and C1QTNF10. Interacts with BMP5 and BMP7; the interaction inhibits BMP-induced transcription of HAMP. Interacts with BMP6; the interaction inhibits BMP-induced transcription of HAMP. Interacts with BMP2. Interacts with heterodimers composed of BMP2 and BMP6 in vitro, the interaction inhibits the heterodimer binding to its receptor BMPR1A /ALK3 and thereby suppresses expression of HAMP. In terms of processing, N-glycosylated; required for secretion of the mature protein. Expressed in the soleus muscle in the leg (at protein level). Found in blood (at protein level). Weakly expressed in the heart (at protein level). Predominantly expressed in skeletal muscle and, at much lower levels, in other tissues, including lung, eye, smooth muscle, brain and kidney. Within skeletal muscles, higher expression levels in soleus as compared with plantaris. Expressed in osteoblasts, mature osteoclasts and erythroblasts. When fasting, females tend to have higher circulating levels than males. Obese mice tend to have lower expression and circulating levels as compared to lean animals. Following EPO treatment, only expressed in bone marrow and spleen.

It is found in the secreted. Functionally, iron-regulatory hormone that acts as an erythroid regulator after hemorrhage: produced by erythroblasts following blood loss and mediates suppression of hepcidin (HAMP) expression in the liver, thereby promoting increased iron absorption and mobilization from stores. Promotes lipid uptake into adipocytes and hepatocytes via transcriptional up-regulation of genes involved in fatty acid uptake. Inhibits apoptosis and inflammatory response in cardiomyocytes via promotion of sphingosine-1-phosphate (S1P) and cAMP-dependent activation of AKT signaling. Inhibits autophagy induced by nutrient deficiency in hepatocytes via promoting the phosphorylation of IRS1, AKT, and MTOR, and thereby subsequent activation of the AKT-MTOR signaling pathway. Negatively regulates the differentiation of osteoblasts, potentially via sequestering BMP2, and thereby inhibits the activation of SMAD signaling. The reduction in BMP2 signaling in osteoblasts also results in an increase in expression of the osteoclastogenesis-promoting factors TNFSF11/RANKL and SOST, thereby indirectly promotes bone resorption. The sequence is that of Erythroferrone from Mus musculus (Mouse).